The sequence spans 70 residues: Conotoxin Mr3.8 (70 aa).

An N-terminal signal peptide occupies residues 1 to 24 (MLKMGVVLFIFLVLFPLATLQLDA). Residues 25-54 (DQPVERYAKNKQLFNPHKRRGIILRAPGKR) constitute a propeptide that is removed on maturation. Disulfide bonds link cysteine 55-cysteine 67, cysteine 56-cysteine 68, and cysteine 61-cysteine 65.

This sequence belongs to the conotoxin M superfamily. Expressed by the venom duct.

The protein localises to the secreted. Its function is as follows. In vitro, inhibits proliferation of the mice ovarian cancer cells ID8. The polypeptide is Conotoxin Mr3.8 (Conus marmoreus (Marble cone)).